The following is a 1154-amino-acid chain: FERM domain-containing protein A (1154 aa).

Disordered regions lie at residues 122–149 (NNNSSIITTTTTTTNNNNNSNCGSSSSS), 432–468 (NLSSSGGSGNGSGSGNGSSSSSSNSSSGNNNNHNHHN), 715–734 (NKNNNNNNNSNNSSTSSSSS), 771–794 (SNSNSNILNNSNDEQSTSTSTSSS), and 961–980 (TNGSSSSSSNNNGGNSNNGI). FERM domains lie at 218–547 (PLHQ…PSIQ) and 666–1103 (REIV…QTKL). Residues 437–447 (GGSGNGSGSGN) are compositionally biased toward gly residues. Positions 448–463 (GSSSSSSNSSSGNNNN) are enriched in low complexity.

Functionally, key regulator of adhesion dynamics, it acts as an anti-adhesive. Plays a critical role in the regulation of cell-cell adhesion, multi-cellular development and, in particular, the formation of the organising center known as the tip. Required for turnover of paxillin-adhesion sites during cell migration. Plays a major role in normal cell shape, cell-substrate adhesion and actin cytoskeleton organization. This Dictyostelium discoideum (Social amoeba) protein is FERM domain-containing protein A (frmA).